Consider the following 404-residue polypeptide: S-adenosylmethionine synthase (404 aa).

H16 provides a ligand contact to ATP. Residue D18 coordinates Mg(2+). K(+) is bound at residue E44. L-methionine is bound by residues E57 and Q100. The tract at residues 100-110 is flexible loop; that stretch reads QSPEINQGVAR. Residues 177–179, D257, 263–264, A280, and K284 each bind ATP; these read DGK and RK. L-methionine is bound at residue D257. K288 contributes to the L-methionine binding site.

Belongs to the AdoMet synthase family. Homotetramer; dimer of dimers. Requires Mg(2+) as cofactor. The cofactor is K(+).

It is found in the cytoplasm. It catalyses the reaction L-methionine + ATP + H2O = S-adenosyl-L-methionine + phosphate + diphosphate. Its pathway is amino-acid biosynthesis; S-adenosyl-L-methionine biosynthesis; S-adenosyl-L-methionine from L-methionine: step 1/1. In terms of biological role, catalyzes the formation of S-adenosylmethionine (AdoMet) from methionine and ATP. The overall synthetic reaction is composed of two sequential steps, AdoMet formation and the subsequent tripolyphosphate hydrolysis which occurs prior to release of AdoMet from the enzyme. The chain is S-adenosylmethionine synthase from Bifidobacterium adolescentis (strain ATCC 15703 / DSM 20083 / NCTC 11814 / E194a).